Reading from the N-terminus, the 616-residue chain is Proline--tRNA ligase (616 aa).

It belongs to the class-II aminoacyl-tRNA synthetase family. ProS type 1 subfamily. In terms of assembly, homodimer.

The protein resides in the cytoplasm. The enzyme catalyses tRNA(Pro) + L-proline + ATP = L-prolyl-tRNA(Pro) + AMP + diphosphate. Functionally, catalyzes the attachment of proline to tRNA(Pro) in a two-step reaction: proline is first activated by ATP to form Pro-AMP and then transferred to the acceptor end of tRNA(Pro). As ProRS can inadvertently accommodate and process non-cognate amino acids such as alanine and cysteine, to avoid such errors it has two additional distinct editing activities against alanine. One activity is designated as 'pretransfer' editing and involves the tRNA(Pro)-independent hydrolysis of activated Ala-AMP. The other activity is designated 'posttransfer' editing and involves deacylation of mischarged Ala-tRNA(Pro). The misacylated Cys-tRNA(Pro) is not edited by ProRS. The sequence is that of Proline--tRNA ligase from Streptococcus gordonii (strain Challis / ATCC 35105 / BCRC 15272 / CH1 / DL1 / V288).